Here is a 779-residue protein sequence, read N- to C-terminus: FAD-dependent monooxygenase BOA8 (779 aa).

Positions 85, 128, 331, and 344 each coordinate FAD. The next 7 helical transmembrane spans lie at 471 to 491, 504 to 524, 542 to 562, 587 to 607, 618 to 638, 665 to 685, and 742 to 762; these read AQLALPLILIALWFFWKKTPE, VKLDMLSSIANAIPFATIWTI, AFLLLAQKLGIELVAPIYFFF, ILPLAILSIFLGPSYCIWSSI, NAWYWYPVYLTMFLRILKFIV, ILICAAFYLYGSLSSSTSIAF, and LILTIXLSSTFLAGPGVGLIV.

The protein belongs to the paxM FAD-dependent monooxygenase family. Requires FAD as cofactor.

Its subcellular location is the membrane. It functions in the pathway polyketide biosynthesis. In terms of biological role, FAD-dependent monooxygenase; part of the gene cluster B that mediates the biosynthesis of botcinic acid and its botcinin derivatives, acetate-derived polyketides that contribute to virulence when combined with the sesquiterpene botrydial. Botcinic acid and its derivatives have been shown to induce chlorosis and necrosis during host plant infection, but also have antifungal activities. Two polyketide synthases, BOA6 and BOA9, are involved in the biosynthesis of botcinins. BOA6 mediates the formation of the per-methylated tetraketide core by condensation of four units of malonyl-CoA with one unit of acetyl-CoA, which would be methylated in activated methylene groups to yield a bicyclic acid intermediate that could then either be converted to botrylactone derivatives or lose the starter acetate unit through a retro-Claisen type C-C bond cleavage to yield botcinin derivatives. The second polyketide synthase, BOA9, is probably required for the biosynthesis of the tetraketide side chain of botcinins. The methyltransferase (MT) domain within BOA6 is probably responsible for the incorporation of four methyl groups. The trans-enoyl reductase BOA5 might take over the enoyl reductase function of BOA6 that misses an ER domain. The monooxygenases BOA2, BOA3 and BOA4 might be involved in further hydroxylations at C4, C5 and C8, whereas BOA7, close to BOA9, could potentially be involved in the hydroxylation at C4 in the side chain of botcinins. This chain is FAD-dependent monooxygenase BOA8, found in Botryotinia fuckeliana (strain B05.10) (Noble rot fungus).